The primary structure comprises 119 residues: UPF0102 protein HI_1656 (119 aa).

Belongs to the UPF0102 family.

The protein is UPF0102 protein HI_1656 of Haemophilus influenzae (strain ATCC 51907 / DSM 11121 / KW20 / Rd).